The chain runs to 226 residues: Phosphoglycolate phosphatase (226 aa).

Asp12 functions as the Nucleophile in the catalytic mechanism. Residues Asp12, Asp14, and Asp177 each coordinate Mg(2+).

It belongs to the HAD-like hydrolase superfamily. CbbY/CbbZ/Gph/YieH family. It depends on Mg(2+) as a cofactor.

The enzyme catalyses 2-phosphoglycolate + H2O = glycolate + phosphate. It functions in the pathway organic acid metabolism; glycolate biosynthesis; glycolate from 2-phosphoglycolate: step 1/1. In terms of biological role, specifically catalyzes the dephosphorylation of 2-phosphoglycolate. Is involved in the dissimilation of the intracellular 2-phosphoglycolate formed during the DNA repair of 3'-phosphoglycolate ends, a major class of DNA lesions induced by oxidative stress. This chain is Phosphoglycolate phosphatase, found in Colwellia psychrerythraea (strain 34H / ATCC BAA-681) (Vibrio psychroerythus).